The sequence spans 261 residues: ATP synthase subunit a (261 aa).

Residues 1–14 (MSTLSFNNISTEVL) constitute a propeptide, removed in mature form. A run of 7 helical transmembrane segments spans residues 38–58 (ITNI…INLL), 96–116 (IYFP…LIGM), 126–146 (HFVV…ILGF), 153–173 (FFSL…LVLI), 191–211 (ANIL…YNIM), 214–234 (GIIF…FSGL), and 235–255 (ELGI…GYIK).

The protein belongs to the ATPase A chain family. As to quaternary structure, F-type ATPases have 2 components, CF(1) - the catalytic core - and CF(0) - the membrane proton channel. CF(1) has five subunits: alpha(3), beta(3), gamma(1), delta(1), epsilon(1). CF(0) has three main subunits: a, b and c.

Its subcellular location is the mitochondrion inner membrane. Functionally, mitochondrial membrane ATP synthase (F(1)F(0) ATP synthase or Complex V) produces ATP from ADP in the presence of a proton gradient across the membrane which is generated by electron transport complexes of the respiratory chain. F-type ATPases consist of two structural domains, F(1) - containing the extramembraneous catalytic core and F(0) - containing the membrane proton channel, linked together by a central stalk and a peripheral stalk. During catalysis, ATP synthesis in the catalytic domain of F(1) is coupled via a rotary mechanism of the central stalk subunits to proton translocation. Key component of the proton channel; it may play a direct role in the translocation of protons across the membrane. This chain is ATP synthase subunit a (atp-6), found in Neurospora crassa (strain ATCC 24698 / 74-OR23-1A / CBS 708.71 / DSM 1257 / FGSC 987).